We begin with the raw amino-acid sequence, 310 residues long: N-acetyl-gamma-glutamyl-phosphate reductase (310 aa).

Cys117 is an active-site residue.

It belongs to the NAGSA dehydrogenase family. Type 2 subfamily.

It is found in the cytoplasm. The catalysed reaction is N-acetyl-L-glutamate 5-semialdehyde + phosphate + NADP(+) = N-acetyl-L-glutamyl 5-phosphate + NADPH + H(+). The protein operates within amino-acid biosynthesis; L-arginine biosynthesis; N(2)-acetyl-L-ornithine from L-glutamate: step 3/4. Catalyzes the NADPH-dependent reduction of N-acetyl-5-glutamyl phosphate to yield N-acetyl-L-glutamate 5-semialdehyde. This chain is N-acetyl-gamma-glutamyl-phosphate reductase, found in Rhizobium etli (strain CIAT 652).